Consider the following 49-residue polypeptide: Large ribosomal subunit protein bL33 (49 aa).

It belongs to the bacterial ribosomal protein bL33 family.

The chain is Large ribosomal subunit protein bL33 from Syntrophus aciditrophicus (strain SB).